A 207-amino-acid polypeptide reads, in one-letter code: FMN-dependent NADH:quinone oxidoreductase 2 (207 aa).

Residues Ser-9, 15-17 (SAS), and 97-100 (MWNF) contribute to the FMN site.

The protein belongs to the azoreductase type 1 family. In terms of assembly, homodimer. FMN serves as cofactor.

The catalysed reaction is 2 a quinone + NADH + H(+) = 2 a 1,4-benzosemiquinone + NAD(+). It catalyses the reaction N,N-dimethyl-1,4-phenylenediamine + anthranilate + 2 NAD(+) = 2-(4-dimethylaminophenyl)diazenylbenzoate + 2 NADH + 2 H(+). Functionally, quinone reductase that provides resistance to thiol-specific stress caused by electrophilic quinones. Its function is as follows. Also exhibits azoreductase activity. Catalyzes the reductive cleavage of the azo bond in aromatic azo compounds to the corresponding amines. The sequence is that of FMN-dependent NADH:quinone oxidoreductase 2 from Burkholderia lata (strain ATCC 17760 / DSM 23089 / LMG 22485 / NCIMB 9086 / R18194 / 383).